Consider the following 134-residue polypeptide: Large ribosomal subunit protein eL14 (134 aa).

It belongs to the eukaryotic ribosomal protein eL14 family. As to quaternary structure, component of the large ribosomal subunit (LSU). Mature yeast ribosomes consist of a small (40S) and a large (60S) subunit. The 40S small subunit contains 1 molecule of ribosomal RNA (18S rRNA) and at least 33 different proteins. The large 60S subunit contains 3 rRNA molecules (25S, 5.8S and 5S rRNA) and at least 46 different proteins.

Its subcellular location is the cytoplasm. The protein resides in the nucleus. In terms of biological role, component of the ribosome, a large ribonucleoprotein complex responsible for the synthesis of proteins in the cell. The small ribosomal subunit (SSU) binds messenger RNAs (mRNAs) and translates the encoded message by selecting cognate aminoacyl-transfer RNA (tRNA) molecules. The large subunit (LSU) contains the ribosomal catalytic site termed the peptidyl transferase center (PTC), which catalyzes the formation of peptide bonds, thereby polymerizing the amino acids delivered by tRNAs into a polypeptide chain. The nascent polypeptides leave the ribosome through a tunnel in the LSU and interact with protein factors that function in enzymatic processing, targeting, and the membrane insertion of nascent chains at the exit of the ribosomal tunnel. This Schizosaccharomyces pombe (strain 972 / ATCC 24843) (Fission yeast) protein is Large ribosomal subunit protein eL14 (rpl14).